Reading from the N-terminus, the 194-residue chain is ATP-dependent Clp protease proteolytic subunit (194 aa).

Catalysis depends on S97, which acts as the Nucleophile. The active site involves H122.

Belongs to the peptidase S14 family. In terms of assembly, fourteen ClpP subunits assemble into 2 heptameric rings which stack back to back to give a disk-like structure with a central cavity, resembling the structure of eukaryotic proteasomes.

It is found in the cytoplasm. The catalysed reaction is Hydrolysis of proteins to small peptides in the presence of ATP and magnesium. alpha-casein is the usual test substrate. In the absence of ATP, only oligopeptides shorter than five residues are hydrolyzed (such as succinyl-Leu-Tyr-|-NHMec, and Leu-Tyr-Leu-|-Tyr-Trp, in which cleavage of the -Tyr-|-Leu- and -Tyr-|-Trp bonds also occurs).. Its function is as follows. Cleaves peptides in various proteins in a process that requires ATP hydrolysis. Has a chymotrypsin-like activity. Plays a major role in the degradation of misfolded proteins. This chain is ATP-dependent Clp protease proteolytic subunit, found in Lactobacillus delbrueckii subsp. bulgaricus (strain ATCC BAA-365 / Lb-18).